The sequence spans 256 residues: Ubiquinone/menaquinone biosynthesis C-methyltransferase UbiE (256 aa).

Residues threonine 79, aspartate 100, and 128–129 (DA) contribute to the S-adenosyl-L-methionine site.

The protein belongs to the class I-like SAM-binding methyltransferase superfamily. MenG/UbiE family.

The enzyme catalyses a 2-demethylmenaquinol + S-adenosyl-L-methionine = a menaquinol + S-adenosyl-L-homocysteine + H(+). It carries out the reaction a 2-methoxy-6-(all-trans-polyprenyl)benzene-1,4-diol + S-adenosyl-L-methionine = a 5-methoxy-2-methyl-3-(all-trans-polyprenyl)benzene-1,4-diol + S-adenosyl-L-homocysteine + H(+). Its pathway is quinol/quinone metabolism; menaquinone biosynthesis; menaquinol from 1,4-dihydroxy-2-naphthoate: step 2/2. It participates in cofactor biosynthesis; ubiquinone biosynthesis. In terms of biological role, methyltransferase required for the conversion of demethylmenaquinol (DMKH2) to menaquinol (MKH2) and the conversion of 2-polyprenyl-6-methoxy-1,4-benzoquinol (DDMQH2) to 2-polyprenyl-3-methyl-6-methoxy-1,4-benzoquinol (DMQH2). In Pseudomonas paraeruginosa (strain DSM 24068 / PA7) (Pseudomonas aeruginosa (strain PA7)), this protein is Ubiquinone/menaquinone biosynthesis C-methyltransferase UbiE.